The following is a 143-amino-acid chain: SsrA-binding protein (143 aa).

It belongs to the SmpB family.

Its subcellular location is the cytoplasm. In terms of biological role, required for rescue of stalled ribosomes mediated by trans-translation. Binds to transfer-messenger RNA (tmRNA), required for stable association of tmRNA with ribosomes. tmRNA and SmpB together mimic tRNA shape, replacing the anticodon stem-loop with SmpB. tmRNA is encoded by the ssrA gene; the 2 termini fold to resemble tRNA(Ala) and it encodes a 'tag peptide', a short internal open reading frame. During trans-translation Ala-aminoacylated tmRNA acts like a tRNA, entering the A-site of stalled ribosomes, displacing the stalled mRNA. The ribosome then switches to translate the ORF on the tmRNA; the nascent peptide is terminated with the 'tag peptide' encoded by the tmRNA and targeted for degradation. The ribosome is freed to recommence translation, which seems to be the essential function of trans-translation. This chain is SsrA-binding protein, found in Mycoplasmoides gallisepticum (strain R(low / passage 15 / clone 2)) (Mycoplasma gallisepticum).